The sequence spans 79 residues: Cell division protein ZapB (79 aa).

Residues 3-79 are a coiled coil; sequence LEVFEKLEAK…QALLGRMEEV (77 aa).

Belongs to the ZapB family. As to quaternary structure, homodimer. The ends of the coiled-coil dimer bind to each other, forming polymers. Interacts with FtsZ.

The protein localises to the cytoplasm. Its function is as follows. Non-essential, abundant cell division factor that is required for proper Z-ring formation. It is recruited early to the divisome by direct interaction with FtsZ, stimulating Z-ring assembly and thereby promoting cell division earlier in the cell cycle. Its recruitment to the Z-ring requires functional FtsA or ZipA. In Salmonella typhi, this protein is Cell division protein ZapB.